We begin with the raw amino-acid sequence, 434 residues long: ATP-dependent protease ATPase subunit HslU (434 aa).

ATP-binding positions include Ile-18, 60–65, Asp-247, Glu-312, and Arg-384; that span reads GVGKTE.

Belongs to the ClpX chaperone family. HslU subfamily. As to quaternary structure, a double ring-shaped homohexamer of HslV is capped on each side by a ring-shaped HslU homohexamer. The assembly of the HslU/HslV complex is dependent on binding of ATP.

It localises to the cytoplasm. Functionally, ATPase subunit of a proteasome-like degradation complex; this subunit has chaperone activity. The binding of ATP and its subsequent hydrolysis by HslU are essential for unfolding of protein substrates subsequently hydrolyzed by HslV. HslU recognizes the N-terminal part of its protein substrates and unfolds these before they are guided to HslV for hydrolysis. This chain is ATP-dependent protease ATPase subunit HslU, found in Brucella melitensis biotype 2 (strain ATCC 23457).